Here is a 177-residue protein sequence, read N- to C-terminus: Large ribosomal subunit protein bL31m (177 aa).

A mitochondrion-targeting transit peptide spans 1–14 (MLKSIFAKRFASTG). Residues 36–118 (KSRPAIYHQF…FSVDSTTPNS (83 aa)) form a sufficient for general mitochondrial translation region. The tract at residues 87–177 (LVVVDANSGG…KLASKKRDKK (91 aa)) is sufficient for dosage suppression of COX2 mutation. The segment covering 111 to 123 (VDSTTPNSSSETV) has biased composition (polar residues). The segment at 111-144 (VDSTTPNSSSETVELSEENKKKTQIKKEEKEDVS) is disordered. Over residues 127 to 144 (EENKKKTQIKKEEKEDVS) the composition is skewed to basic and acidic residues.

The protein belongs to the bacterial ribosomal protein bL31 family. Highly divergent. In terms of assembly, component of the mitochondrial large ribosomal subunit (mt-LSU). Mature yeast 74S mitochondrial ribosomes consist of a small (37S) and a large (54S) subunit. The 37S small subunit contains a 15S ribosomal RNA (15S mt-rRNA) and 34 different proteins. The 54S large subunit contains a 21S rRNA (21S mt-rRNA) and 46 different proteins.

It localises to the mitochondrion. Component of the mitochondrial ribosome (mitoribosome), a dedicated translation machinery responsible for the synthesis of mitochondrial genome-encoded proteins, including at least some of the essential transmembrane subunits of the mitochondrial respiratory chain. The mitoribosomes are attached to the mitochondrial inner membrane and translation products are cotranslationally integrated into the membrane. Overexpression of bL31m suppresses mutations in the COX2 leader peptide-encoding and initiation codon regions. This chain is Large ribosomal subunit protein bL31m (MRPL36), found in Saccharomyces cerevisiae (strain ATCC 204508 / S288c) (Baker's yeast).